A 271-amino-acid polypeptide reads, in one-letter code: Tryptophan synthase alpha chain (271 aa).

Catalysis depends on proton acceptor residues glutamate 49 and aspartate 60.

It belongs to the TrpA family. In terms of assembly, tetramer of two alpha and two beta chains.

It catalyses the reaction (1S,2R)-1-C-(indol-3-yl)glycerol 3-phosphate + L-serine = D-glyceraldehyde 3-phosphate + L-tryptophan + H2O. Its pathway is amino-acid biosynthesis; L-tryptophan biosynthesis; L-tryptophan from chorismate: step 5/5. In terms of biological role, the alpha subunit is responsible for the aldol cleavage of indoleglycerol phosphate to indole and glyceraldehyde 3-phosphate. In Burkholderia pseudomallei (strain 1106a), this protein is Tryptophan synthase alpha chain.